The chain runs to 430 residues: Keratin, type I cytoskeletal 18 (430 aa).

The residue at position 2 (Ser2) is an N-acetylserine. The head stretch occupies residues 2–79; that stretch reads SFTTRSTFST…GLAGMGGIQN (78 aa). Ser7, Ser10, Ser15, and Ser18 each carry phosphoserine. Residues Ser30 and Ser31 each carry the phosphoserine; alternate modification. O-linked (GlcNAc) serine; alternate glycans are attached at residues Ser30 and Ser31. Ser34 carries the phosphoserine; by CDK1 modification. Position 36 is a phosphotyrosine (Tyr36). At Ser42 the chain carries Phosphoserine. Residue Arg45 is modified to Omega-N-methylarginine. Ser49 is modified (phosphoserine; alternate). Ser49 is a glycosylation site (O-linked (GlcNAc) serine; alternate). Residue Ser51 is modified to Phosphoserine; by MAPKAPK2 and MAPKAPK3. A Phosphothreonine modification is found at Thr52. Ser53 is subject to Phosphoserine; by CAMK, PKC/PRKCE and AURKA. Residue Arg55 is modified to Omega-N-methylarginine. Residue Ser60 is modified to Phosphoserine. Phosphothreonine is present on Thr65. The interval 70–373 is necessary for interaction with PNN; sequence GLAGMGGIQN…EALLNIKVKL (304 aa). The tract at residues 77 to 128 is interaction with TRADD; it reads IQNEKETMQSLNDRLASYLDRVRSLETENRRLESKIREHLEKKGPQVRDWSH. The tract at residues 80–115 is coil 1A; it reads EKETMQSLNDRLASYLDRVRSLETENRRLESKIREH. The region spanning 80–391 is the IF rod domain; sequence EKETMQSLND…RLLEDGEDFN (312 aa). A Glycyl lysine isopeptide (Lys-Gly) (interchain with G-Cter in SUMO2) cross-link involves residue Lys81. Ser93 and Ser100 each carry phosphoserine. The segment at 116–132 is linker 1; sequence LEKKGPQVRDWSHYFKI. Residue Lys131 is modified to N6-acetyllysine. A coil 1B region spans residues 133 to 224; it reads IEDLRAQIFA…KNHEEEVKGL (92 aa). Ser177 bears the Phosphoserine mark. Positions 225 to 248 are linker 12; that stretch reads QAQIASSGLTVEVDAPKSQDLAKI. The tract at residues 243-391 is interaction with DNAJB6; sequence QDLAKIMADI…RLLEDGEDFN (149 aa). A Glycyl lysine isopeptide (Lys-Gly) (interchain with G-Cter in SUMO2) cross-link involves residue Lys247. The tract at residues 249–387 is coil 2; it reads MADIRAQYDE…ATYRRLLEDG (139 aa). Thr302 is subject to Phosphothreonine. Ser305, Ser319, and Ser323 each carry phosphoserine. Residues Lys370 and Lys372 each participate in a glycyl lysine isopeptide (Lys-Gly) (interchain with G-Cter in SUMO2) cross-link. The segment at 388–430 is tail; that stretch reads EDFNLGDALDSSNSMQTIQKTTTRRIVDGKVVSETNDTKVLRH. Phosphoserine is present on residues Ser398, Ser399, and Ser401. Residue Thr404 is modified to Phosphothreonine. Lys417 participates in a covalent cross-link: Glycyl lysine isopeptide (Lys-Gly) (interchain with G-Cter in SUMO2). Lys426 bears the N6-acetyllysine; alternate mark. Lys426 participates in a covalent cross-link: Glycyl lysine isopeptide (Lys-Gly) (interchain with G-Cter in SUMO1); alternate. A Glycyl lysine isopeptide (Lys-Gly) (interchain with G-Cter in SUMO2); alternate cross-link involves residue Lys426.

This sequence belongs to the intermediate filament family. As to quaternary structure, heterotetramer of two type I and two type II keratins. KRT18 associates with KRT8. Interacts with PLEC isoform 1C, when in a heterodimer with KRT8. Interacts with the thrombin-antithrombin complex. Interacts with PNN and mutated CFTR. Interacts with YWHAE, YWHAH and YWHAZ only when phosphorylated. Interacts with DNAJB6, TCHP and TRADD. Interacts with FAM83H. Interacts with EPPK1. Interacts with PKP1 and PKP2. (Microbial infection) Interacts with hepatitis C virus/HCV core protein. In terms of processing, phosphorylation at Ser-34 increases during mitosis. Hyperphosphorylated at Ser-53 in diseased cirrhosis liver. Phosphorylation increases by IL-6. Post-translationally, proteolytically cleaved by caspases during epithelial cell apoptosis. Cleavage occurs at Asp-238 by either caspase-3, caspase-6 or caspase-7. O-GlcNAcylation increases solubility, and decreases stability by inducing proteasomal degradation. In terms of tissue distribution, expressed in colon, placenta, liver and very weakly in exocervix. Increased expression observed in lymph nodes of breast carcinoma.

The protein resides in the nucleus matrix. It is found in the cytoplasm. Its subcellular location is the perinuclear region. It localises to the nucleus. The protein localises to the nucleolus. Functionally, involved in the uptake of thrombin-antithrombin complexes by hepatic cells. When phosphorylated, plays a role in filament reorganization. Involved in the delivery of mutated CFTR to the plasma membrane. Together with KRT8, is involved in interleukin-6 (IL-6)-mediated barrier protection. The polypeptide is Keratin, type I cytoskeletal 18 (KRT18) (Homo sapiens (Human)).